The sequence spans 32 residues: Acetolactate synthase, catabolic (32 aa).

This sequence belongs to the TPP enzyme family. Homodimer.

The enzyme catalyses 2 pyruvate + H(+) = (2S)-2-acetolactate + CO2. The protein operates within polyol metabolism; (R,R)-butane-2,3-diol biosynthesis; (R,R)-butane-2,3-diol from pyruvate: step 1/3. The polypeptide is Acetolactate synthase, catabolic (budB) (Klebsiella aerogenes (Enterobacter aerogenes)).